The primary structure comprises 182 residues: ATP synthase subunit delta (182 aa).

Belongs to the ATPase delta chain family. In terms of assembly, F-type ATPases have 2 components, F(1) - the catalytic core - and F(0) - the membrane proton channel. F(1) has five subunits: alpha(3), beta(3), gamma(1), delta(1), epsilon(1). CF(0) has four main subunits: a(1), b(1), b'(1) and c(10-14). The alpha and beta chains form an alternating ring which encloses part of the gamma chain. F(1) is attached to F(0) by a central stalk formed by the gamma and epsilon chains, while a peripheral stalk is formed by the delta, b and b' chains.

Its subcellular location is the cellular thylakoid membrane. F(1)F(0) ATP synthase produces ATP from ADP in the presence of a proton or sodium gradient. F-type ATPases consist of two structural domains, F(1) containing the extramembraneous catalytic core and F(0) containing the membrane proton channel, linked together by a central stalk and a peripheral stalk. During catalysis, ATP synthesis in the catalytic domain of F(1) is coupled via a rotary mechanism of the central stalk subunits to proton translocation. Its function is as follows. This protein is part of the stalk that links CF(0) to CF(1). It either transmits conformational changes from CF(0) to CF(1) or is implicated in proton conduction. The polypeptide is ATP synthase subunit delta (Prochlorococcus marinus (strain MIT 9211)).